The primary structure comprises 102 residues: MAKQKIRIRLKAFEHRILDQSADKIVETAKRTGASISGPIPLPTERTLYTVLRSPHKHKDSREQFEMRTHKRLIDIVNPTPKTVDSLMKLDLPSGVDIEIKL.

This sequence belongs to the universal ribosomal protein uS10 family. In terms of assembly, part of the 30S ribosomal subunit.

Involved in the binding of tRNA to the ribosomes. In Latilactobacillus sakei subsp. sakei (strain 23K) (Lactobacillus sakei subsp. sakei), this protein is Small ribosomal subunit protein uS10.